A 216-amino-acid polypeptide reads, in one-letter code: Protein-L-isoaspartate O-methyltransferase (216 aa).

S62 is an active-site residue.

This sequence belongs to the methyltransferase superfamily. L-isoaspartyl/D-aspartyl protein methyltransferase family.

Its subcellular location is the cytoplasm. The enzyme catalyses [protein]-L-isoaspartate + S-adenosyl-L-methionine = [protein]-L-isoaspartate alpha-methyl ester + S-adenosyl-L-homocysteine. Its function is as follows. Catalyzes the methyl esterification of L-isoaspartyl residues in peptides and proteins that result from spontaneous decomposition of normal L-aspartyl and L-asparaginyl residues. It plays a role in the repair and/or degradation of damaged proteins. In Methanospirillum hungatei JF-1 (strain ATCC 27890 / DSM 864 / NBRC 100397 / JF-1), this protein is Protein-L-isoaspartate O-methyltransferase.